Consider the following 225-residue polypeptide: Ribose-5-phosphate isomerase A (225 aa).

Substrate-binding positions include 26-29 (TGST), 82-85 (DGAD), and 95-98 (KGGG). Glutamate 104 acts as the Proton acceptor in catalysis. Lysine 122 contributes to the substrate binding site.

This sequence belongs to the ribose 5-phosphate isomerase family. In terms of assembly, homodimer.

It carries out the reaction aldehydo-D-ribose 5-phosphate = D-ribulose 5-phosphate. Its pathway is carbohydrate degradation; pentose phosphate pathway; D-ribose 5-phosphate from D-ribulose 5-phosphate (non-oxidative stage): step 1/1. In terms of biological role, catalyzes the reversible conversion of ribose-5-phosphate to ribulose 5-phosphate. In Streptococcus sanguinis (strain SK36), this protein is Ribose-5-phosphate isomerase A.